Here is a 257-residue protein sequence, read N- to C-terminus: MSQIEFKDVNKVYPNGHVGLKDINLNIEKGDFAVIVGLSGAGKSTLLRSVNRLHDITSGDILIEGKSITKAKGNDLLMMRRNIGMIFQHFNLVKRSSVLRNVLSGRVGYHPTWKMVLGLFPKEDKVKAMDALERVNILDKYDQRSDELSGGQQQRISIARALAQEPAIILADEPVASLDPLTTKQVMDDLKKINEELGITILINLHFVDLALEYGTRIIGLRAGELVFDGPASEATEEVFNDIYGRKLKDDEKLGVE.

An ABC transporter domain is found at 4-248 (IEFKDVNKVY…VFNDIYGRKL (245 aa)). 37 to 44 (GLSGAGKS) is an ATP binding site.

This sequence belongs to the ABC transporter superfamily. Phosphonates importer (TC 3.A.1.9.1) family. As to quaternary structure, the complex is composed of two ATP-binding proteins (PhnC), two transmembrane proteins (PhnE) and a solute-binding protein (PhnD).

It localises to the cell membrane. It carries out the reaction phosphonate(out) + ATP + H2O = phosphonate(in) + ADP + phosphate + H(+). Part of the ABC transporter complex PhnCDE involved in phosphonates import. Responsible for energy coupling to the transport system. This Staphylococcus haemolyticus (strain JCSC1435) protein is Phosphonates import ATP-binding protein PhnC.